The following is a 1609-amino-acid chain: Chitin synthase 5 (1609 aa).

Disordered regions lie at residues 1-188 (MNPF…DRER), 248-280 (SGLG…GRDE), and 294-320 (VSLR…ESKT). Residues 1-326 (MNPFESLPDA…ESKTSRIAPG (326 aa)) are Cytoplasmic-facing. Residues 34-44 (PGSTGRPQNPI) are compositionally biased toward polar residues. Residues 61–82 (PQQQQQQQQQQQQQQQRSQQPF) show a composition bias toward low complexity. The span at 100–111 (AYLNSTSSQPTQ) shows a compositional bias: polar residues. Residues 134–146 (DSVKSYGDDKRSI) are compositionally biased toward basic and acidic residues. Residues 147 to 163 (NDPNSSSTALTQVNSLD) are compositionally biased toward polar residues. Residues 253–267 (TGPTNVPPGGLGRAP) show a composition bias toward low complexity. Positions 307–320 (PSKEVPRDLGESKT) are enriched in basic and acidic residues. Residues 327–347 (PVGGWMIYCYILTICCPGPFL) traverse the membrane as a helical segment. Residues 348–364 (RIFGIRTPEQQRAWREK) are Extracellular-facing. A helical membrane pass occupies residues 365–385 (MGLIGIITLIMAAVGFLTFGF). Residues 386-624 (TQTVCGQQPD…ASKVELYLSL (239 aa)) are Cytoplasmic-facing. The helical transmembrane segment at 625–645 (VFIIGVVAIKFFMAVMFGWFI) threads the bilayer. At 646-1176 (SWRLGNYANE…MRFVVFMELT (531 aa)) the chain is on the extracellular side. N-linked (GlcNAc...) asparagine glycosylation occurs at asparagine 654. The segment at 729–767 (GVASPLGGSPPGSPSVAGGRSSASLAPAHSRRSSFSGSP) is disordered. The segment covering 742-752 (PSVAGGRSSAS) has biased composition (low complexity). Residues asparagine 1015 and asparagine 1144 are each glycosylated (N-linked (GlcNAc...) asparagine). A helical membrane pass occupies residues 1177 to 1197 (GTLVLPAAIAFTLYVVVQAFL). The Cytoplasmic portion of the chain corresponds to 1198–1202 (PNVPT). A helical transmembrane segment spans residues 1203-1223 (PTIPLILLALILGLPGILIVV). The Extracellular segment spans residues 1224 to 1227 (TSRK). The helical transmembrane segment at 1228–1248 (IAYVGWMLIYLLSLPIWNFVL) threads the bilayer. Topologically, residues 1249–1609 (PLYAYWHMDD…PPGAAPPSFD (361 aa)) are cytoplasmic. Disordered regions lie at residues 1354–1381 (PNAM…PSGA) and 1399–1609 (TDAK…PSFD). Composition is skewed to polar residues over residues 1502 to 1514 (NVST…TVSE) and 1530 to 1552 (GSAS…QTRP). Over residues 1568 to 1588 (AQGVRQVQRGARRSQMPNSAA) the composition is skewed to low complexity.

Belongs to the chitin synthase family. Class IV subfamily.

Its subcellular location is the cell membrane. It is found in the cytoplasmic vesicle membrane. The catalysed reaction is [(1-&gt;4)-N-acetyl-beta-D-glucosaminyl](n) + UDP-N-acetyl-alpha-D-glucosamine = [(1-&gt;4)-N-acetyl-beta-D-glucosaminyl](n+1) + UDP + H(+). Polymerizes chitin, a structural polymer of the cell wall and septum, by transferring the sugar moiety of UDP-GlcNAc to the non-reducing end of the growing chitin polymer. The polypeptide is Chitin synthase 5 (Mycosarcoma maydis (Corn smut fungus)).